Here is a 1011-residue protein sequence, read N- to C-terminus: Vacuolar membrane protease (1011 aa).

Over 1–14 (MKLTKAVFRFRRTN) the chain is Cytoplasmic. A helical transmembrane segment spans residues 15 to 35 (LSTLLVITYLVITTLYVWDHF). The Vacuolar segment spans residues 36-352 (RYHFTLPSDY…WFVVWSARSL (317 aa)). Zn(2+)-binding residues include histidine 149, aspartate 161, glutamate 194, glutamate 219, and histidine 293. The chain crosses the membrane as a helical span at residues 353–373 (FYWNCIILALFPSILAILFLV). Topologically, residues 374–390 (AYDMQLLKFNFWDAMLR) are cytoplasmic. A helical membrane pass occupies residues 391–411 (LPVSVCLAYFCVKLFQVLVGQ). Residues 412-420 (LNPYVFSRD) are Vacuolar-facing. The helical transmembrane segment at 421–441 (YVSPILAEASMFIFMNYVILS) threads the bilayer. Residues 442 to 451 (SWERLRPLRD) lie on the Cytoplasmic side of the membrane. A helical membrane pass occupies residues 452 to 472 (FKTVALVEVSMVLWIYLISVT). Over 473 to 487 (RWLRDSDYTATGLYP) the chain is Vacuolar. A helical membrane pass occupies residues 488–508 (FTIGYTFVSIGAIIGVFCATF). At 509–647 (KAKLNPEDDS…SILNYDWSIQ (139 aa)) the chain is on the cytoplasmic side. The disordered stretch occupies residues 534 to 585 (MQHQYQQHSQKHSNQHSPHHSTHHSAQHSVHHSPRQSIHQVPSSEQRQRDAS). The segment covering 542 to 567 (SQKHSNQHSPHHSTHHSAQHSVHHSP) has biased composition (basic residues). Over residues 568–578 (RQSIHQVPSSE) the composition is skewed to polar residues. The helical transmembrane segment at 648–668 (FMVVTPWVTYFTWICLDLIMG) threads the bilayer. At 669–681 (AMNQTIQESAKGT) the chain is on the vacuolar side. Asparagine 671 carries N-linked (GlcNAc...) asparagine glycosylation. Residues 682–702 (TFVTHMALIGSLLLSLPMLPF) form a helical membrane-spanning segment. At 703 to 708 (TYKLHS) the chain is on the cytoplasmic side. The chain crosses the membrane as a helical span at residues 709–729 (FAGMLFLLLAVTTAVWTIVAP). The Vacuolar portion of the chain corresponds to 730-1011 (PFTESSPLKL…MVSVTKYVEL (282 aa)). Residues asparagine 751, asparagine 825, and asparagine 854 are each glycosylated (N-linked (GlcNAc...) asparagine).

The protein belongs to the peptidase M28 family. Requires Zn(2+) as cofactor.

It is found in the vacuole membrane. Its function is as follows. May be involved in vacuolar sorting and osmoregulation. The polypeptide is Vacuolar membrane protease (Eremothecium gossypii (strain ATCC 10895 / CBS 109.51 / FGSC 9923 / NRRL Y-1056) (Yeast)).